The primary structure comprises 557 residues: Enhancer of polycomb-like protein 1 (557 aa).

Disordered regions lie at residues 323–349 (VKPA…RPQP) and 424–449 (QSHN…TYST). Over residues 327–337 (APVPTPAPPVK) the composition is skewed to pro residues. The segment covering 429 to 441 (LSIPSSTPSTPLS) has biased composition (low complexity).

This sequence belongs to the enhancer of polycomb family. In terms of assembly, component of the NuA4 histone acetyltransferase complex.

It is found in the nucleus. Its function is as follows. Component of the NuA4 histone acetyltransferase complex which is involved in transcriptional activation of selected genes principally by acetylation of nucleosomal histone H4 and H2A. The NuA4 complex is also involved in DNA repair. Involved in gene silencing by neighboring heterochromatin, blockage of the silencing spreading along the chromosome, and required for cell cycle progression through G2/M. In Schizosaccharomyces pombe (strain 972 / ATCC 24843) (Fission yeast), this protein is Enhancer of polycomb-like protein 1 (epl1).